We begin with the raw amino-acid sequence, 485 residues long: uncharacterized protein (485 aa).

Helical transmembrane passes span 79–99, 117–137, 139–159, 170–190, 199–219, 275–295, 313–333, 355–375, 380–400, 421–441, and 448–468; these read LVTL…LIFA, VFAL…FLVF, FFSG…LADL, VIYF…SGFI, WEFW…FLLL, ILIC…LVLI, GLMY…AMPI, LPMG…FGWT, IFWF…IMTS, GVKI…ESLF, and WGCT…PILF.

It belongs to the major facilitator superfamily. CAR1 family.

It is found in the golgi apparatus. It localises to the membrane. This is an uncharacterized protein from Schizosaccharomyces pombe (strain 972 / ATCC 24843) (Fission yeast).